The chain runs to 306 residues: Histone-lysine N-methyltransferase SETMAR (306 aa).

In terms of domain architecture, Pre-SET spans 60 to 123 (PGCACLKTPC…RCRNRVVQWG (64 aa)). Zn(2+)-binding residues include Cys62, Cys64, Cys69, Cys74, Cys76, Cys105, Cys109, Cys111, and Cys115. Residues 126 to 250 (FHLQVFKTDH…PEEELSYDYS (125 aa)) enclose the SET domain. S-adenosyl-L-methionine contacts are provided by residues 136-138 (KGW), Tyr179, Arg207, and 210-211 (NH). Zn(2+) is bound by residues Cys213, Cys274, Cys276, and Cys281. Residues 270-286 (LRKPCYCGARSCAAFLP) enclose the Post-SET domain.

Belongs to the class V-like SAM-binding methyltransferase superfamily.

The protein localises to the nucleus. The protein resides in the chromosome. It catalyses the reaction L-lysyl(36)-[histone H3] + 2 S-adenosyl-L-methionine = N(6),N(6)-dimethyl-L-lysyl(36)-[histone H3] + 2 S-adenosyl-L-homocysteine + 2 H(+). Functionally, histone methyltransferase that methylates 'Lys-4' and 'Lys-36' of histone H3, 2 specific tags for epigenetic transcriptional activation. Specifically mediates dimethylation of H3 'Lys-36'. The protein is Histone-lysine N-methyltransferase SETMAR of Bos taurus (Bovine).